A 383-amino-acid polypeptide reads, in one-letter code: NifS-like protein (383 aa).

Pyridoxal 5'-phosphate is bound by residues 58-59 and 184-186; these read SE and SLN.

This sequence belongs to the class-V pyridoxal-phosphate-dependent aminotransferase family. NifS/IscS subfamily. Pyridoxal 5'-phosphate serves as cofactor.

Its subcellular location is the virion. This is NifS-like protein from African swine fever virus (isolate Pig/Kenya/KEN-50/1950) (ASFV).